The following is a 325-amino-acid chain: Zinc metalloproteinase/disintegrin (325 aa).

A propeptide spanning residues 1 to 39 is cleaved from the precursor; that stretch reads KYENVEKGDEAPKKCGVTHTNLESDEPIEKASQLFGTSE. The residue at position 40 (Gln40) is a Pyrrolidone carboxylic acid. A Peptidase M12B domain is found at 46-242; it reads RHIELVIVAD…HNPQRILNEP (197 aa). A Zn(2+)-binding site is contributed by His182. Residue Glu183 is part of the active site. Residues His186 and His192 each contribute to the Zn(2+) site. Disulfide bonds link Cys197–Cys221 and Cys199–Cys204. A propeptide spanning residues 243-257 is cleaved from the precursor; it reads LRTDTVSTPVYGNVL. One can recognise a Disintegrin domain in the interval 250–322; sequence TPVYGNVLQN…SECESNPWNF (73 aa). Position 258 is a pyrrolidone carboxylic acid (Gln258). 4 cysteine pairs are disulfide-bonded: Cys264-Cys287, Cys278-Cys284, Cys283-Cys308, and Cys296-Cys315. The Cell attachment site motif lies at 300–302; it reads RGD.

It belongs to the venom metalloproteinase (M12B) family. P-II subfamily. P-IIe sub-subfamily. As to quaternary structure, heterodimer of bitisgabonin and gabonin-1 (bitisgabonin-1) or gabonin-2 (bitisgabonin-2); disulfide-linked. Requires Zn(2+) as cofactor. Expressed by the venom gland.

It is found in the secreted. Functionally, impairs hemostasis in the envenomed animal. In dimer with gabonin-1 (bitisgabonin-1), is a potent inhibitor of the adhesion of the RGD-dependent integrin alpha-5/beta-1 (ITGA5/ITGB1) to immobilized fibronectin. In terms of biological role, in dimer with gabonin-2 (bitisgabonin-2), preferentially inhibits the adhesion of the alpha-4/beta-1 (ITGA4/ITGB1) and alpha-9/beta-1 (ITGA9/ITGB1) integrins to VCAM-1 and also acts as a strong antagonist of alpha-5/beta-1 (ITGA5/ITGB1). The chain is Zinc metalloproteinase/disintegrin from Bitis gabonica (Gaboon adder).